Reading from the N-terminus, the 198-residue chain is Glycerol-3-phosphate acyltransferase (198 aa).

Transmembrane regions (helical) follow at residues 6–26 (FLPVALVIGYLLGSIPFGLVL), 56–78 (LAAGTLLLDALKGTVAVVIAGYI), 83–101 (AAMAAGLGAFLGHLFPVWL), 113–133 (IGILLGLFWPAAVVFCLLWLA), and 155–175 (FLWWFGHLALSALFAVLTLLL).

The protein belongs to the PlsY family. In terms of assembly, probably interacts with PlsX.

Its subcellular location is the cell inner membrane. It catalyses the reaction an acyl phosphate + sn-glycerol 3-phosphate = a 1-acyl-sn-glycero-3-phosphate + phosphate. It participates in lipid metabolism; phospholipid metabolism. Functionally, catalyzes the transfer of an acyl group from acyl-phosphate (acyl-PO(4)) to glycerol-3-phosphate (G3P) to form lysophosphatidic acid (LPA). This enzyme utilizes acyl-phosphate as fatty acyl donor, but not acyl-CoA or acyl-ACP. The protein is Glycerol-3-phosphate acyltransferase of Bradyrhizobium diazoefficiens (strain JCM 10833 / BCRC 13528 / IAM 13628 / NBRC 14792 / USDA 110).